Here is a 365-residue protein sequence, read N- to C-terminus: Cobalt-precorrin-5B C(1)-methyltransferase (365 aa).

It belongs to the CbiD family.

It carries out the reaction Co-precorrin-5B + S-adenosyl-L-methionine = Co-precorrin-6A + S-adenosyl-L-homocysteine. Its pathway is cofactor biosynthesis; adenosylcobalamin biosynthesis; cob(II)yrinate a,c-diamide from sirohydrochlorin (anaerobic route): step 6/10. In terms of biological role, catalyzes the methylation of C-1 in cobalt-precorrin-5B to form cobalt-precorrin-6A. This chain is Cobalt-precorrin-5B C(1)-methyltransferase, found in Polaromonas naphthalenivorans (strain CJ2).